The sequence spans 737 residues: Death domain-associated protein 6 (737 aa).

Residues 1-55 (MATANSIIVLDDDDEDEAAAQPGPSHPPPNPASPQAEAPGSSQPHGAGGSSSSGG) are disordered. The tract at residues 1 to 159 (MATANSIIVL…TSSEPSGNNP (159 aa)) is necessary for interaction with USP7 and ATRX. At S25 the chain carries Phosphoserine. The span at 33–45 (SPQAEAPGSSQPH) shows a compositional bias: low complexity. K142 participates in a covalent cross-link: Glycyl lysine isopeptide (Lys-Gly) (interchain with G-Cter in SUMO2). Residues 145-184 (LAPAATSSEPSGNNPPTDPSSDPTNAETTASEAPRTRGSR) are disordered. The span at 149–175 (ATSSEPSGNNPPTDPSSDPTNAETTAS) shows a compositional bias: polar residues. A coiled-coil region spans residues 179–216 (RTRGSRRQIQRLEQLLALYVAEIRRLQEKELDLSELDD). The interval 182–417 (GSRRQIQRLE…PLKASLDSGE (236 aa)) is interaction with histone H3.3. At S212 the chain carries Phosphoserine. The interval 346-567 (GIDPALSDPA…SPISQLFELE (222 aa)) is necessary for interaction with USP7. The segment at 382–556 (QDKSEEGERQ…ENLEELLLEE (175 aa)) is disordered. The Nuclear localization signal signature appears at 390 to 394 (RQKRR). S412 and S424 each carry phosphoserine. Polar residues predominate over residues 422-432 (MASQECPTTSK). Positions 432–474 (KPETDDEEDEESEEEEEEEEEEEEEEATDSEEEEDLEQMQEGQ) form a coiled coil. A compositionally biased stretch (acidic residues) spans 435-489 (TDDEEDEESEEEEEEEEEEEEEEATDSEEEEDLEQMQEGQGDDEEEEEEEEEAGQ). T459 is subject to Phosphothreonine. Phosphoserine occurs at positions 494 and 497. Position 511 is an N6-acetyllysine (K511). Positions 517 to 527 (MGEQQNKEFTV) are enriched in polar residues. Residues 528 to 547 (SPSSEEPLAPSSIDAESNGE) show a composition bias toward low complexity. Phosphoserine is present on residues S558 and S578. The segment at 569–719 (EALPLDTTPS…QPSRPGTYKM (151 aa)) is disordered. Basic and acidic residues predominate over residues 579–592 (PEERDISSSRKQSE). An interaction with SPOP region spans residues 624-737 (CPPCKKSRKE…EEIIVLSDSD (114 aa)). A Nuclear localization signal motif is present at residues 626–632 (PCKKSRK). Residues K628 and K629 each participate in a glycyl lysine isopeptide (Lys-Gly) (interchain with G-Cter in SUMO1) cross-link. Residues 647 to 657 (ERQRSVHEKNG) are compositionally biased toward basic and acidic residues. 6 positions are modified to phosphoserine: S665, S668, S685, S699, S734, and S736. Positions 678-713 (DSSTRVDSPSHGLVTSSLCSASQARLSQTPHSQPSR) are enriched in polar residues. Residues 730 to 737 (IIVLSDSD) form a sumo interaction motif (SIM) region.

Belongs to the DAXX family. As to quaternary structure, homomultimer. Interacts (via C-terminus) with TNFRSF6 (via death domain). Interacts with PAX5, SLC2A4/GLUT4, MAP3K5, TGFBR2, phosphorylated dimeric HSPB1/HSP27, CENPC, ETS1, sumoylated PML, UBE2I, MCRS1 and TP53. Interacts (via N-terminus) with HIPK2 and HIPK3. Interacts with HIPK1, which induces translocation from PML/POD/ND10 nuclear bodies to chromatin and enhances association with HDAC1. Interacts (non-phosphorylated) with PAX3, PAX7, DEK, HDAC1, HDAC2, HDAC3, acetylated histone H4 and histones H2A, H2B, H3, H3.3 and H4. Interacts with SPOP; mediating CUL3-dependent proteasomal degradation. Interacts with CBP; the interaction is dependent the sumoylation of CBP and suppresses CBP transcriptional activity via recruitment of HDAC2 directly in the complex with TP53 and HIPK2. Interacts with AXIN1; the interaction stimulates the interaction of DAXX with TP53, stimulates 'Ser-46' phosphorylation of TP53 on and induces cell death on UV irradiation. Interacts with MDM2; the interaction is direct. Interacts with USP7; the interaction is direct and independent of MDM2 and TP53. Part of a complex with DAXX, MDM2 and USP7 under non-stress conditions. Interacts (via N-terminus) with RASSF1 (via C-terminus); the interaction is independent of MDM2 and TP53; RASSF1 isoform A disrupts interactions among MDM2, DAXX and USP7, thus contributing to the efficient activation of TP53 by promoting MDM2 self-ubiquitination in cell-cycle checkpoint control in response to DNA damage. Interacts with ATRX to form the chromatin remodeling complex ATRX:DAXX. Interacts with HSF1 (via homotrimeric form preferentially); this interaction relieves homotrimeric HSF1 from repression of its transcriptional activity by HSP90-dependent multichaperone complex upon heat shock. In terms of processing, sumoylated with SUMO1 on multiple lysine residues. Polyubiquitinated; which is promoted by CUL3 and SPOP and results in proteasomal degradation. Ubiquitinated by MDM2; inducing its degradation. Deubiquitinated by USP7; leading to stabilize it.

It is found in the cytoplasm. The protein localises to the nucleus. It localises to the nucleoplasm. The protein resides in the PML body. Its subcellular location is the nucleolus. It is found in the chromosome. The protein localises to the centromere. Its function is as follows. Transcription corepressor known to repress transcriptional potential of several sumoylated transcription factors. Down-regulates basal and activated transcription. Its transcription repressor activity is modulated by recruiting it to subnuclear compartments like the nucleolus or PML/POD/ND10 nuclear bodies through interactions with MCSR1 and PML, respectively. Seems to regulate transcription in PML/POD/ND10 nuclear bodies together with PML and may influence TNFRSF6-dependent apoptosis thereby. Inhibits transcriptional activation of PAX3 and ETS1 through direct protein-protein interactions. Modulates PAX5 activity; the function seems to involve CREBBP. Acts as an adapter protein in a MDM2-DAXX-USP7 complex by regulating the RING-finger E3 ligase MDM2 ubiquitination activity. Under non-stress condition, in association with the deubiquitinating USP7, prevents MDM2 self-ubiquitination and enhances the intrinsic E3 ligase activity of MDM2 towards TP53, thereby promoting TP53 ubiquitination and subsequent proteasomal degradation. Upon DNA damage, its association with MDM2 and USP7 is disrupted, resulting in increased MDM2 autoubiquitination and consequently, MDM2 degradation, which leads to TP53 stabilization. Acts as a histone chaperone that facilitates deposition of histone H3.3. Acts as a targeting component of the chromatin remodeling complex ATRX:DAXX which has ATP-dependent DNA translocase activity and catalyzes the replication-independent deposition of histone H3.3 in pericentric DNA repeats outside S-phase and telomeres, and the in vitro remodeling of H3.3-containing nucleosomes. Does not affect the ATPase activity of ATRX but alleviates its transcription repression activity. Upon neuronal activation associates with regulatory elements of selected immediate early genes where it promotes deposition of histone H3.3 which may be linked to transcriptional induction of these genes. Required for the recruitment of histone H3.3:H4 dimers to PML-nuclear bodies (PML-NBs); the process is independent of ATRX and facilitated by ASF1A; PML-NBs are suggested to function as regulatory sites for the incorporation of newly synthesized histone H3.3 into chromatin. Proposed to mediate activation of the JNK pathway and apoptosis via MAP3K5 in response to signaling from TNFRSF6 and TGFBR2. Interaction with HSPB1/HSP27 may prevent interaction with TNFRSF6 and MAP3K5 and block DAXX-mediated apoptosis. In contrast, in lymphoid cells JNC activation and TNFRSF6-mediated apoptosis may not involve DAXX. Plays a role as a positive regulator of the heat shock transcription factor HSF1 activity during the stress protein response. This is Death domain-associated protein 6 (DAXX) from Canis lupus familiaris (Dog).